Reading from the N-terminus, the 278-residue chain is UPF0276 protein Ssed_2857 (278 aa).

The protein belongs to the UPF0276 family.

The protein is UPF0276 protein Ssed_2857 of Shewanella sediminis (strain HAW-EB3).